The sequence spans 425 residues: Adenylosuccinate synthetase (425 aa).

Residues 12 to 18 and 40 to 42 each bind GTP; these read GDEGKGK and GHT. Residue Asp13 is the Proton acceptor of the active site. Residues Asp13 and Gly40 each contribute to the Mg(2+) site. Residues 13 to 16, 38 to 41, Thr130, Arg144, Gln224, Thr239, and Arg301 contribute to the IMP site; these read DEGK and NAGH. His41 acts as the Proton donor in catalysis. Residue 297–303 participates in substrate binding; the sequence is TVSNRRR. GTP contacts are provided by residues Arg303, 329 to 331, and 411 to 413; these read KLD and STS.

It belongs to the adenylosuccinate synthetase family. In terms of assembly, homodimer. Mg(2+) is required as a cofactor.

It localises to the cytoplasm. It catalyses the reaction IMP + L-aspartate + GTP = N(6)-(1,2-dicarboxyethyl)-AMP + GDP + phosphate + 2 H(+). It participates in purine metabolism; AMP biosynthesis via de novo pathway; AMP from IMP: step 1/2. In terms of biological role, plays an important role in the de novo pathway of purine nucleotide biosynthesis. Catalyzes the first committed step in the biosynthesis of AMP from IMP. The polypeptide is Adenylosuccinate synthetase (Wolbachia sp. subsp. Drosophila simulans (strain wRi)).